The sequence spans 202 residues: MKTEIDAKTVKKLRDETGAGMMTCKQALTENHGDYDKAIESLRLKGMATADKKSSRNTNEGLIYSYIHTGSKLGILLEINCETDFVARREEFTDLAKNISMQIASNPEIQVVSLDDISDLTKIEVRKFENAKDDLQNKPEEIKNKIVEGRVEKSLKKQVLLEQEYIRDPNITVTEYIKQVVSILGENIRVQRFTRYVLGEID.

This sequence belongs to the EF-Ts family.

Its subcellular location is the plastid. It localises to the chloroplast. Associates with the EF-Tu.GDP complex and induces the exchange of GDP to GTP. It remains bound to the aminoacyl-tRNA.EF-Tu.GTP complex up to the GTP hydrolysis stage on the ribosome. The polypeptide is Elongation factor Ts, chloroplastic (tsf) (Phaeodactylum tricornutum (strain CCAP 1055/1)).